The chain runs to 201 residues: Recombination protein RecR (201 aa).

A C4-type zinc finger spans residues Cys-60–Cys-75. One can recognise a Toprim domain in the interval Ser-83–Pro-178.

The protein belongs to the RecR family.

Functionally, may play a role in DNA repair. It seems to be involved in an RecBC-independent recombinational process of DNA repair. It may act with RecF and RecO. This chain is Recombination protein RecR, found in Agrobacterium fabrum (strain C58 / ATCC 33970) (Agrobacterium tumefaciens (strain C58)).